Here is a 406-residue protein sequence, read N- to C-terminus: MARALIIVLDSVGVGGAPDADRYGDTGSDTLGHIAERCAEGRGDRAGLRAGPLRLPHLAELGLGLAAAGASGRIPPNLTPVGPPRGVYGHAVETAAGKDTPSGHWEIAGLPLPEPWGHFPDTRPAFPPELTRALVAEGDLPGILGDCHAPGVAIIDALGAEHLRTGRPICYTSADSVFQIAAHEEAFGLERLYDLCRVARRLCDRYRVCRVIARPFVGSPEAGFRRTGNRRDLAVAPPGRTLLDRAEAAGRAVVSVGKIGDIFAHRATGREIKPGPNAACLTAGLDALATLPQGGLIFVNLVDFDTEHGHRRDVPGYAAELEAFDARIPEILAALAPGDLAVITADHGNDPTWTGTDHTREQVPVLAFGPGVAARPIGRRETFADIGATVAAHLGLAWDGAGTPFL.

Aspartate 10, aspartate 305, histidine 310, aspartate 346, histidine 347, and histidine 358 together coordinate Mn(2+).

It belongs to the phosphopentomutase family. Mn(2+) is required as a cofactor.

The protein resides in the cytoplasm. It catalyses the reaction 2-deoxy-alpha-D-ribose 1-phosphate = 2-deoxy-D-ribose 5-phosphate. The enzyme catalyses alpha-D-ribose 1-phosphate = D-ribose 5-phosphate. Its pathway is carbohydrate degradation; 2-deoxy-D-ribose 1-phosphate degradation; D-glyceraldehyde 3-phosphate and acetaldehyde from 2-deoxy-alpha-D-ribose 1-phosphate: step 1/2. Functionally, isomerase that catalyzes the conversion of deoxy-ribose 1-phosphate (dRib-1-P) and ribose 1-phosphate (Rib-1-P) to deoxy-ribose 5-phosphate (dRib-5-P) and ribose 5-phosphate (Rib-5-P), respectively. The polypeptide is Phosphopentomutase (Methylobacterium radiotolerans (strain ATCC 27329 / DSM 1819 / JCM 2831 / NBRC 15690 / NCIMB 10815 / 0-1)).